Consider the following 321-residue polypeptide: Thioredoxin reductase (321 aa).

FAD is bound by residues 11–14 (SGPA), 40–41 (TA), glutamine 45, asparagine 54, cysteine 145, aspartate 288, and 295–297 (RQA). A disulfide bridge connects residues cysteine 142 and cysteine 145.

This sequence belongs to the class-II pyridine nucleotide-disulfide oxidoreductase family. As to quaternary structure, homodimer. FAD serves as cofactor.

Its subcellular location is the cytoplasm. It catalyses the reaction [thioredoxin]-dithiol + NADP(+) = [thioredoxin]-disulfide + NADPH + H(+). This chain is Thioredoxin reductase (TRR1), found in Debaryomyces hansenii (strain ATCC 36239 / CBS 767 / BCRC 21394 / JCM 1990 / NBRC 0083 / IGC 2968) (Yeast).